Consider the following 1087-residue polypeptide: Transcription factor AP2-Z (1087 aa).

Residues 586 to 682 (GRVYKVIVRG…IKYNSVPDSL (97 aa)) constitute a DNA-binding region (AP2).

Belongs to the AP2/ERF transcription factor family. AP2 subfamily.

It localises to the nucleus. The protein localises to the chromosome. Functionally, transcription factor which binds the 5'-[TC][AC]TG[AT]AC[AG]-3' motif. During the mosquito vector stage, plays an essential role in the zygote for de novo transcription of genes required for ookinete formation. The protein is Transcription factor AP2-Z of Plasmodium berghei (strain Anka).